Reading from the N-terminus, the 349-residue chain is Core protein VP7 (349 aa).

The N-linked (GlcNAc...) asparagine; by host glycan is linked to N45.

This sequence belongs to the orbivirus VP7 family. In terms of assembly, homotrimer.

The protein localises to the virion. Its function is as follows. Major structural core protein; binds to structural protein VP3. Constitutes the surface of the AHSV core. The polypeptide is Core protein VP7 (Segment-7) (African horse sickness virus 6 (AHSV-6)).